The following is a 258-amino-acid chain: Type III pantothenate kinase (258 aa).

Residue 6 to 13 (DVGNSDTV) coordinates ATP. 108–111 (GSDR) is a substrate binding site. Asp110 acts as the Proton acceptor in catalysis. Asp130 is a K(+) binding site. Thr133 contributes to the ATP binding site. Thr185 lines the substrate pocket.

This sequence belongs to the type III pantothenate kinase family. As to quaternary structure, homodimer. It depends on NH4(+) as a cofactor. The cofactor is K(+).

Its subcellular location is the cytoplasm. The catalysed reaction is (R)-pantothenate + ATP = (R)-4'-phosphopantothenate + ADP + H(+). The protein operates within cofactor biosynthesis; coenzyme A biosynthesis; CoA from (R)-pantothenate: step 1/5. Its function is as follows. Catalyzes the phosphorylation of pantothenate (Pan), the first step in CoA biosynthesis. The protein is Type III pantothenate kinase of Thermobifida fusca (strain YX).